The sequence spans 242 residues: Uroporphyrinogen-III C-methyltransferase (242 aa).

Residues Pro-12, 88 to 90, 118 to 119, and Met-170 contribute to the S-adenosyl-L-homocysteine site; these read GGD and TS.

The protein belongs to the precorrin methyltransferase family. In terms of assembly, homodimer.

The enzyme catalyses uroporphyrinogen III + 2 S-adenosyl-L-methionine = precorrin-2 + 2 S-adenosyl-L-homocysteine + H(+). It functions in the pathway cofactor biosynthesis; adenosylcobalamin biosynthesis; precorrin-2 from uroporphyrinogen III: step 1/1. Its function is as follows. Catalyzes the two successive C-2 and C-7 methylation reactions involved in the conversion of uroporphyrinogen III to precorrin-2 via the intermediate formation of precorrin-1. It is a step in the biosynthesis of both cobalamin (vitamin B12) and coenzyme F430. The polypeptide is Uroporphyrinogen-III C-methyltransferase (cobA) (Methanocaldococcus jannaschii (strain ATCC 43067 / DSM 2661 / JAL-1 / JCM 10045 / NBRC 100440) (Methanococcus jannaschii)).